A 483-amino-acid polypeptide reads, in one-letter code: Phloretin 2'-O-glucosyltransferase (483 aa).

The Proton acceptor role is filled by H15. H15 is a binding site for an anthocyanidin. D118 functions as the Charge relay in the catalytic mechanism. UDP-alpha-D-glucose contacts are provided by T140, A360, Q362, H377, W380, N381, S382, and E385. A400 provides a ligand contact to an anthocyanidin. UDP-alpha-D-glucose is bound by residues E401 and Q402.

This sequence belongs to the UDP-glycosyltransferase family. In terms of tissue distribution, highly expressed in roots and at lower levels in leaves, flowers and fruits.

It carries out the reaction phloretin + UDP-alpha-D-glucose = phlorizin + UDP + H(+). Its function is as follows. Glycosyltransferase that possesses phloretin 2'-O-glycosyltransferase activity. Converts phloretin to phlorizin (phloretin 2'-O-glucoside), a potent antioxidant. Is specific for phloretin and does not possess glycosyltransferase activity toward caffeic acid, catechin, chlorogenic acid, 2-coumaric acid, 3-coumaric acid, 4-coumaric acid, cyanidin, 3,4-dihydroxyhydrocinnamic acid, epicatechin, 3-hydroxybenzoic acid, naringenin, 3,4-dihydroxybenzoic acid, quercetin and rutin. Can glycosylate phloretin in the presence of UDP-glucose, UDP-xylose and UDP-galactose. This chain is Phloretin 2'-O-glucosyltransferase, found in Malus domestica (Apple).